A 1450-amino-acid polypeptide reads, in one-letter code: DNA-directed RNA polymerase RPB1 homolog (1450 aa).

This sequence belongs to the RNA polymerase beta' chain family. As to quaternary structure, part of the viral DNA-directed RNA polymerase that consists of 8 polII-like subunits (RPB1, RPB2, RPB3, RPB5, RPB6, RPB7, RPB9, RPB10), a capping enzyme and a termination factor.

The protein localises to the virion. The catalysed reaction is RNA(n) + a ribonucleoside 5'-triphosphate = RNA(n+1) + diphosphate. Its function is as follows. Catalytic component of the DNA-directed RNA polymerase (RNAP) that catalyzes the transcription in the cytoplasm of viral DNA into RNA using the four ribonucleoside triphosphates as substrates. Forms the polymerase active center together with RPB2. Part of the core element with the central large cleft, the clamp element that moves to open and close the cleft and the jaws that are thought to grab the incoming DNA template. This African swine fever virus (isolate Pig/Kenya/KEN-50/1950) (ASFV) protein is DNA-directed RNA polymerase RPB1 homolog.